We begin with the raw amino-acid sequence, 500 residues long: NAD(P)H-quinone oxidoreductase chain 4, chloroplastic (500 aa).

Transmembrane regions (helical) follow at residues F3 to F23, I37 to L57, I87 to I107, L113 to S130, L134 to M154, F167 to L187, A208 to I228, H242 to V262, A272 to A292, I305 to D325, G330 to G350, L386 to T406, I416 to M436, and L462 to V482.

The protein belongs to the complex I subunit 4 family.

It is found in the plastid. The protein localises to the chloroplast thylakoid membrane. It carries out the reaction a plastoquinone + NADH + (n+1) H(+)(in) = a plastoquinol + NAD(+) + n H(+)(out). The catalysed reaction is a plastoquinone + NADPH + (n+1) H(+)(in) = a plastoquinol + NADP(+) + n H(+)(out). This Platanus occidentalis (Sycamore) protein is NAD(P)H-quinone oxidoreductase chain 4, chloroplastic.